The sequence spans 967 residues: Serine/threonine-protein kinase/endoribonuclease ire-1 (967 aa).

Residues 1 to 21 form the signal peptide; the sequence is MRATFHLFTFIFLLLFSSVIC. The Lumenal segment spans residues 22 to 438; it reads ISTPGFRNDH…LLLLNNHPIP (417 aa). Residues N100 and N188 are each glycosylated (N-linked (GlcNAc...) asparagine). The chain crosses the membrane as a helical span at residues 439 to 455; the sequence is FYATLVTMFALLLTVIW. Topologically, residues 456–967 are cytoplasmic; the sequence is QCGRQWDQQK…IKKKSNPNTD (512 aa). The interval 474–494 is disordered; sequence EIVNNPGESRSAQTSKQSNRG. The span at 479 to 494 shows a compositional bias: polar residues; the sequence is PGESRSAQTSKQSNRG. Residues 518-778 enclose the Protein kinase domain; that stretch reads YSPSDILGTG…ADAVLNHPFF (261 aa). ATP-binding positions include 524 to 532 and K546; that span reads LGTGCEGTV. D636 serves as the catalytic Proton acceptor. S672 carries the post-translational modification Phosphoserine; by autocatalysis. Residues 781-909 enclose the KEN domain; the sequence is SEKRLAYFSD…EAVFKRYYSD (129 aa). The interval 948 to 967 is disordered; that stretch reads RTPLKLDKRNIKKKSNPNTD. Basic residues predominate over residues 957–967; sequence NIKKKSNPNTD.

This sequence belongs to the protein kinase superfamily. Ser/Thr protein kinase family. The cofactor is Mg(2+). Autophosphorylated mainly on serine residues.

Its subcellular location is the endoplasmic reticulum membrane. The enzyme catalyses L-seryl-[protein] + ATP = O-phospho-L-seryl-[protein] + ADP + H(+). It carries out the reaction L-threonyl-[protein] + ATP = O-phospho-L-threonyl-[protein] + ADP + H(+). The kinase domain is activated by trans-autophosphorylation. Kinase activity is required for activation of the endoribonuclease domain. Functionally, senses unfolded proteins in the lumen of the endoplasmic reticulum via its N-terminal domain which leads to enzyme auto-activation. The active endoribonuclease domain splices xbp-1 precursor mRNA to produce the mature form which then induces transcription of UPR target genes. Unfolded protein response (UPR) transcriptional activation by ire-1, as well as translational attenuation by pek-1 in a complementary pathway, maintains ER homeostasis. Regulates the transcriptional up-regulation of nucleoside-diphosphatase apy-1 and many other genes, upon ER stress. By activating the UPR pathway during non-lethal hypoxia pre-conditioning, confers adaptive protection to subsequent exposure to hypoxia. ire-1 and pek-1 are redundant genes that control a pathway essential for larval development and survival. Plays a role in the nuclear retention of unspliced mRNAs. In Caenorhabditis elegans, this protein is Serine/threonine-protein kinase/endoribonuclease ire-1.